The chain runs to 53 residues: Minor histocompatibility protein HMSD variant form (53 aa).

In terms of assembly, ACC-6 forms a complex with MHC HLA-B*4403. As to expression, highly expressed in dendritic cells and primary leukemia cells, especially those of myeloid lineage. ACC-6 expression is limited to cells of the hematopoietic lineage.

This splice variant of HMSD is the precursor of the histocompatibility antigen ACC-6. More generally, minor histocompatibility antigens (mHags) refer to immunogenic peptide which, when complexed with MHC, can generate an immune response after recognition by specific T-cells. The peptides are derived from polymorphic intracellular proteins, which are cleaved by normal pathways of antigen processing. The binding of these peptides to MHC class I or class II molecules and its expression on the cell surface can stimulate T-cell responses and thereby trigger graft rejection or graft-versus-host disease (GVHD) after hematopoietic stem cell transplantation from HLA-identical sibling donor. GVHD is a frequent complication after bone marrow transplantation (BMT), due to mismatch of minor histocompatibility antigen in HLA-matched sibling marrow transplants. However, associated with GVHD, a favorable graft-versus-leukemia (GVL) can be induced by donor-recipient disparities in mHags. ACC-6 is presented to the cell surface by MHC HLA-B*4403. This complex specifically elicits donor-cytotoxic T-lymphocyte (CTL) reactivity against hematologic malignancies after treatment by HLA-identical allogenic BMT. It induces cell recognition and lysis by CTL. Immunogenicity of most autosomal mHags results from single-nucleotide polymorphisms that cause amino-acid substitutions within epitopes, leading to the differential recognition of peptides between donor and recipient. This chain is Minor histocompatibility protein HMSD variant form (HMSD), found in Homo sapiens (Human).